The following is a 465-amino-acid chain: UDP-glucose:undecaprenyl-phosphate glucose-1-phosphate transferase (465 aa).

A run of 5 helical transmembrane segments spans residues 23 to 43 (FSDI…NDYF), 46 to 66 (LHYV…GGIT), 82 to 102 (ILIL…VTLF), 105 to 125 (FDLT…GFVV), and 280 to 300 (IIVS…IATA).

This sequence belongs to the bacterial sugar transferase family.

Its subcellular location is the cell inner membrane. The enzyme catalyses di-trans,octa-cis-undecaprenyl phosphate + UDP-alpha-D-glucose = alpha-D-glucosyl di-trans,octa-cis-undecaprenyl diphosphate + UMP. The protein operates within capsule biogenesis; capsule polysaccharide biosynthesis. Functionally, is likely the initiating enzyme for the K2 capsular polysaccharide synthesis. Catalyzes the transfer of the glucose-1-phosphate moiety from UDP-Glc onto the carrier lipid undecaprenyl phosphate (C55-P), forming a phosphoanhydride bond yielding to glucosyl-pyrophosphoryl-undecaprenol (Glc-PP-C55). The polypeptide is UDP-glucose:undecaprenyl-phosphate glucose-1-phosphate transferase (Klebsiella pneumoniae).